Reading from the N-terminus, the 321-residue chain is uncharacterized protein (321 aa).

The HTH lacI-type domain occupies Met1 to Lys56. The H-T-H motif DNA-binding region spans Ile4–Asn23.

This is an uncharacterized protein from Bacillus subtilis (strain 168).